The sequence spans 208 residues: High frequency lysogenization protein HflD homolog (208 aa).

The protein belongs to the HflD family.

The protein resides in the cytoplasm. The protein localises to the cell inner membrane. This Yersinia pestis bv. Antiqua (strain Nepal516) protein is High frequency lysogenization protein HflD homolog.